Consider the following 83-residue polypeptide: MSSGGLLLLLGLLTLWEGLTPVSSKDRPEFCELPADSGSCKGNFQAFYYHPVHRTCLEFIYGGCEGNANNFKTIDECKRTCAA.

The signal sequence occupies residues 1–24 (MSSGGLLLLLGLLTLWEGLTPVSS). The BPTI/Kunitz inhibitor domain maps to 31–81 (CELPADSGSCKGNFQAFYYHPVHRTCLEFIYGGCEGNANNFKTIDECKRTC). Intrachain disulfides connect Cys-31/Cys-81, Cys-40/Cys-64, and Cys-56/Cys-77.

It localises to the secreted. Serine protease inhibitor. The chain is Blackelin-5 from Pseudechis porphyriacus (Red-bellied black snake).